A 365-amino-acid polypeptide reads, in one-letter code: tRNA N6-adenosine threonylcarbamoyltransferase (365 aa).

His-119 and His-123 together coordinate Fe cation. Substrate contacts are provided by residues 141 to 145, Asp-174, Gly-187, and Asn-288; that span reads LVSGG. Asp-316 serves as a coordination point for Fe cation.

The protein belongs to the KAE1 / TsaD family. It depends on Fe(2+) as a cofactor.

The protein localises to the cytoplasm. It carries out the reaction L-threonylcarbamoyladenylate + adenosine(37) in tRNA = N(6)-L-threonylcarbamoyladenosine(37) in tRNA + AMP + H(+). Required for the formation of a threonylcarbamoyl group on adenosine at position 37 (t(6)A37) in tRNAs that read codons beginning with adenine. Is involved in the transfer of the threonylcarbamoyl moiety of threonylcarbamoyl-AMP (TC-AMP) to the N6 group of A37, together with TsaE and TsaB. TsaD likely plays a direct catalytic role in this reaction. The polypeptide is tRNA N6-adenosine threonylcarbamoyltransferase (Rhizobium johnstonii (strain DSM 114642 / LMG 32736 / 3841) (Rhizobium leguminosarum bv. viciae)).